We begin with the raw amino-acid sequence, 324 residues long: NADH-ubiquinone oxidoreductase chain 1 (324 aa).

The next 9 membrane-spanning stretches (helical) occupy residues 9–29, 43–63, 75–95, 106–126, 146–166, 177–197, 228–250, 259–279, and 299–319; these read ILNP…LTLL, PNIV…KLFI, ILFI…WAPL, LAIL…LGSG, ISYE…TGGF, SIWL…STLA, LFFL…LFLG, ELTT…FLWV, and FLPL…TFAG.

This sequence belongs to the complex I subunit 1 family.

It is found in the mitochondrion inner membrane. It carries out the reaction a ubiquinone + NADH + 5 H(+)(in) = a ubiquinol + NAD(+) + 4 H(+)(out). Functionally, core subunit of the mitochondrial membrane respiratory chain NADH dehydrogenase (Complex I) that is believed to belong to the minimal assembly required for catalysis. Complex I functions in the transfer of electrons from NADH to the respiratory chain. The immediate electron acceptor for the enzyme is believed to be ubiquinone. In Tetraodon nigroviridis (Spotted green pufferfish), this protein is NADH-ubiquinone oxidoreductase chain 1 (MT-ND1).